The sequence spans 120 residues: C-C motif chemokine 16 (120 aa).

The first 23 residues, 1–23 (MKVSEAALSLLVLILIITSASRS), serve as a signal peptide directing secretion. Cystine bridges form between C37–C60 and C38–C76.

The protein belongs to the intercrine beta (chemokine CC) family. In terms of tissue distribution, mainly expressed in liver, also found in spleen and thymus. Highly expressed in LPS- and IFN-gamma-activated monocytes, weakly in some lymphocytes, including natural killer cells, gamma-delta T-cells, and some T-cell clones.

Its subcellular location is the secreted. In terms of biological role, shows chemotactic activity for lymphocytes and monocytes but not neutrophils. Also shows potent myelosuppressive activity, suppresses proliferation of myeloid progenitor cells. Recombinant SCYA16 shows chemotactic activity for monocytes and THP-1 monocytes, but not for resting lymphocytes and neutrophils. Induces a calcium flux in THP-1 cells that were desensitized by prior expression to RANTES. In Homo sapiens (Human), this protein is C-C motif chemokine 16 (CCL16).